The sequence spans 233 residues: UPF0173 metal-dependent hydrolase Igni_1254 (233 aa).

The protein belongs to the UPF0173 family.

This chain is UPF0173 metal-dependent hydrolase Igni_1254, found in Ignicoccus hospitalis (strain KIN4/I / DSM 18386 / JCM 14125).